Consider the following 345-residue polypeptide: Glycerol-3-phosphate dehydrogenase [NAD(P)+] (345 aa).

5 residues coordinate NADPH: serine 11, tryptophan 12, histidine 32, arginine 33, and lysine 106. Sn-glycerol 3-phosphate is bound by residues lysine 106, glycine 137, and serine 139. NADPH is bound at residue alanine 141. Lysine 192, aspartate 245, serine 255, arginine 256, and asparagine 257 together coordinate sn-glycerol 3-phosphate. Catalysis depends on lysine 192, which acts as the Proton acceptor. Residue arginine 256 participates in NADPH binding. Residues valine 280 and glutamate 282 each coordinate NADPH.

The protein belongs to the NAD-dependent glycerol-3-phosphate dehydrogenase family.

It is found in the cytoplasm. The catalysed reaction is sn-glycerol 3-phosphate + NAD(+) = dihydroxyacetone phosphate + NADH + H(+). It catalyses the reaction sn-glycerol 3-phosphate + NADP(+) = dihydroxyacetone phosphate + NADPH + H(+). Its pathway is membrane lipid metabolism; glycerophospholipid metabolism. With respect to regulation, does not seem to be inhibited by sn-glycerol 3-phosphate, in contrast to the E.coli homolog enzyme which is very sensitive to allosteric inhibition by G3P. Catalyzes the reduction of the glycolytic intermediate dihydroxyacetone phosphate (DHAP) to sn-glycerol 3-phosphate (G3P), the key precursor for phospholipid synthesis. The sequence is that of Glycerol-3-phosphate dehydrogenase [NAD(P)+] from Bacillus subtilis (strain 168).